A 366-amino-acid polypeptide reads, in one-letter code: MGHLTLKDAVFLTITSIVGGGIFVLSPLTYLLFGKSIIWGWALLIFVSLIMASPFAYASTKISESGGVYKFVMKILGREIGVFSAYILWLSGVFALSGVVSFFEIVFNTKFNVSYVGLCLIVILTALILGGLRIVGNFVRIFGILTITIILYIVFSNGIKIDSIGEFNLKNAILTIYFGLWTATGWEGITMPLSAFKNQKAIAYGLLVGTFIIGVLYLLFSLTIVSLNVKTNNLDEILKILIGDNLFLLAGMLLIISSCAFSVLFTLSYMPYGMGKDRIFPKAFIKLRKEIPYYGVILNTLLVIILLIFDAKTLVDMSMFSTLIAYFLLYLAVFKESSGKIKAISLISMLITGLLILFRVYNFIIL.

Helical transmembrane passes span 14–34 (ITSI…LLFG), 37–57 (IIWG…PFAY), 87–107 (ILWL…EIVF), 111–131 (FNVS…ILGG), 141–161 (IFGI…GIKI), 173–193 (ILTI…TMPL), 205–225 (GLLV…LTIV), 247–267 (FLLA…LFTL), 291–311 (IPYY…IFDA), 314–334 (LVDM…LAVF), and 346–366 (LISM…FIIL).

It belongs to the amino acid-polyamine-organocation (APC) superfamily.

It localises to the cell membrane. This is Putative amino-acid transporter MJ1196 from Methanocaldococcus jannaschii (strain ATCC 43067 / DSM 2661 / JAL-1 / JCM 10045 / NBRC 100440) (Methanococcus jannaschii).